The following is a 299-amino-acid chain: HTH-type transcriptional regulator CysL (299 aa).

The HTH lysR-type domain maps to 1–58; the sequence is MYYDVLKTFIAVVEEKNFTKAAEKLMISQPSVSLHIKNLEKEFQTALLNRSPKHFTTT. Residues 18–37 constitute a DNA-binding region (H-T-H motif); that stretch reads FTKAAEKLMISQPSVSLHIK.

It belongs to the LysR transcriptional regulatory family.

Functionally, transcriptional activator of the cysJI operon which is involved in sulfur assimilation. Also negatively regulates its own transcription. This Bacillus subtilis (strain 168) protein is HTH-type transcriptional regulator CysL (cysL).